The following is a 1551-amino-acid chain: Pentafunctional AROM polypeptide 2 (1551 aa).

Residues 1–379 (MSIEKVSILG…YESKAHQIFK (379 aa)) form a 3-dehydroquinate synthase region. NAD(+) is bound by residues 42 to 44 (DTN), 80 to 83 (ENHK), 111 to 113 (GGV), and Asp-116. Arg-127 serves as a coordination point for 7-phospho-2-dehydro-3-deoxy-D-arabino-heptonate. An NAD(+)-binding site is contributed by 136 to 137 (TT). 7-phospho-2-dehydro-3-deoxy-D-arabino-heptonate-binding residues include Asp-143 and Lys-149. NAD(+) is bound at residue Lys-158. Position 159 (Asn-159) interacts with 7-phospho-2-dehydro-3-deoxy-D-arabino-heptonate. NAD(+)-binding positions include 176–179 (FLQT) and Asn-187. Glu-191 is a binding site for Zn(2+). 7-phospho-2-dehydro-3-deoxy-D-arabino-heptonate-binding positions include 191–194 (EVVK) and Lys-243. The active-site Proton acceptor; for 3-dehydroquinate synthase activity is the Glu-253. 7-phospho-2-dehydro-3-deoxy-D-arabino-heptonate contacts are provided by residues 257–261 (RNLLN) and His-264. His-264 contacts Zn(2+). Catalysis depends on His-268, which acts as the Proton acceptor; for 3-dehydroquinate synthase activity. 7-phospho-2-dehydro-3-deoxy-D-arabino-heptonate contacts are provided by His-280 and Lys-351. A Zn(2+)-binding site is contributed by His-280. The interval 392–835 (VHPFANRHPE…WDVLHSKFNA (444 aa)) is EPSP synthase. The interval 854 to 1044 (DRSIVIIGMR…LPATRSTFVT (191 aa)) is shikimate kinase. Position 861 to 868 (861 to 868 (GMRAAGKT)) interacts with ATP. The segment at 1045–1258 (LTYPDLRKVP…IGVGQLSLKE (214 aa)) is 3-dehydroquinase. His-1162 functions as the Proton acceptor; for 3-dehydroquinate dehydratase activity in the catalytic mechanism. Lys-1191 acts as the Schiff-base intermediate with substrate; for 3-dehydroquinate dehydratase activity in catalysis. A shikimate dehydrogenase region spans residues 1271–1551 (EKEFWVVGFP…KVIHSAVLNE (281 aa)).

This sequence in the N-terminal section; belongs to the sugar phosphate cyclases superfamily. Dehydroquinate synthase family. The protein in the 2nd section; belongs to the EPSP synthase family. In the 3rd section; belongs to the shikimate kinase family. It in the 4th section; belongs to the type-I 3-dehydroquinase family. This sequence in the C-terminal section; belongs to the shikimate dehydrogenase family. As to quaternary structure, homodimer. Requires Zn(2+) as cofactor.

It localises to the cytoplasm. The catalysed reaction is 7-phospho-2-dehydro-3-deoxy-D-arabino-heptonate = 3-dehydroquinate + phosphate. It carries out the reaction 3-dehydroquinate = 3-dehydroshikimate + H2O. It catalyses the reaction shikimate + NADP(+) = 3-dehydroshikimate + NADPH + H(+). The enzyme catalyses shikimate + ATP = 3-phosphoshikimate + ADP + H(+). The catalysed reaction is 3-phosphoshikimate + phosphoenolpyruvate = 5-O-(1-carboxyvinyl)-3-phosphoshikimate + phosphate. It participates in metabolic intermediate biosynthesis; chorismate biosynthesis; chorismate from D-erythrose 4-phosphate and phosphoenolpyruvate: step 2/7. The protein operates within metabolic intermediate biosynthesis; chorismate biosynthesis; chorismate from D-erythrose 4-phosphate and phosphoenolpyruvate: step 3/7. Its pathway is metabolic intermediate biosynthesis; chorismate biosynthesis; chorismate from D-erythrose 4-phosphate and phosphoenolpyruvate: step 4/7. It functions in the pathway metabolic intermediate biosynthesis; chorismate biosynthesis; chorismate from D-erythrose 4-phosphate and phosphoenolpyruvate: step 5/7. It participates in metabolic intermediate biosynthesis; chorismate biosynthesis; chorismate from D-erythrose 4-phosphate and phosphoenolpyruvate: step 6/7. Its function is as follows. The AROM polypeptide catalyzes 5 consecutive enzymatic reactions in prechorismate polyaromatic amino acid biosynthesis. This chain is Pentafunctional AROM polypeptide 2, found in Lodderomyces elongisporus (strain ATCC 11503 / CBS 2605 / JCM 1781 / NBRC 1676 / NRRL YB-4239) (Yeast).